Reading from the N-terminus, the 89-residue chain is Large ribosomal subunit protein eL37A (89 aa).

The Zn(2+) site is built by cysteine 19, cysteine 22, cysteine 34, and cysteine 37. Residues 19-37 (CRRCGKRSFHIQKSTCACC) form a C4-type zinc finger.

The protein belongs to the eukaryotic ribosomal protein eL37 family. Component of the large ribosomal subunit (LSU). Mature yeast ribosomes consist of a small (40S) and a large (60S) subunit. The 40S small subunit contains 1 molecule of ribosomal RNA (18S rRNA) and at least 33 different proteins. The large 60S subunit contains 3 rRNA molecules (25S, 5.8S and 5S rRNA) and at least 46 different proteins. It depends on Zn(2+) as a cofactor.

It localises to the cytoplasm. Functionally, component of the ribosome, a large ribonucleoprotein complex responsible for the synthesis of proteins in the cell. The small ribosomal subunit (SSU) binds messenger RNAs (mRNAs) and translates the encoded message by selecting cognate aminoacyl-transfer RNA (tRNA) molecules. The large subunit (LSU) contains the ribosomal catalytic site termed the peptidyl transferase center (PTC), which catalyzes the formation of peptide bonds, thereby polymerizing the amino acids delivered by tRNAs into a polypeptide chain. The nascent polypeptides leave the ribosome through a tunnel in the LSU and interact with protein factors that function in enzymatic processing, targeting, and the membrane insertion of nascent chains at the exit of the ribosomal tunnel. In Schizosaccharomyces pombe (strain 972 / ATCC 24843) (Fission yeast), this protein is Large ribosomal subunit protein eL37A (rpl3703).